Consider the following 326-residue polypeptide: Aspartate carbamoyltransferase catalytic subunit (326 aa).

Carbamoyl phosphate-binding residues include Arg-60 and Thr-61. Lys-88 provides a ligand contact to L-aspartate. Positions 110, 143, and 146 each coordinate carbamoyl phosphate. Positions 183 and 239 each coordinate L-aspartate. Positions 280 and 281 each coordinate carbamoyl phosphate.

It belongs to the aspartate/ornithine carbamoyltransferase superfamily. ATCase family. In terms of assembly, heterododecamer (2C3:3R2) of six catalytic PyrB chains organized as two trimers (C3), and six regulatory PyrI chains organized as three dimers (R2).

It carries out the reaction carbamoyl phosphate + L-aspartate = N-carbamoyl-L-aspartate + phosphate + H(+). It functions in the pathway pyrimidine metabolism; UMP biosynthesis via de novo pathway; (S)-dihydroorotate from bicarbonate: step 2/3. In terms of biological role, catalyzes the condensation of carbamoyl phosphate and aspartate to form carbamoyl aspartate and inorganic phosphate, the committed step in the de novo pyrimidine nucleotide biosynthesis pathway. This is Aspartate carbamoyltransferase catalytic subunit from Microcystis aeruginosa (strain NIES-843 / IAM M-2473).